Consider the following 355-residue polypeptide: 3-dehydroquinate synthase (355 aa).

Residues 69-74 (DGEQHK), 103-107 (GVIGD), 127-128 (TT), K140, K149, and 167-170 (TLQT) contribute to the NAD(+) site. The Zn(2+) site is built by E182, H245, and H262.

Belongs to the sugar phosphate cyclases superfamily. Dehydroquinate synthase family. Co(2+) serves as cofactor. Zn(2+) is required as a cofactor. Requires NAD(+) as cofactor.

Its subcellular location is the cytoplasm. The enzyme catalyses 7-phospho-2-dehydro-3-deoxy-D-arabino-heptonate = 3-dehydroquinate + phosphate. It functions in the pathway metabolic intermediate biosynthesis; chorismate biosynthesis; chorismate from D-erythrose 4-phosphate and phosphoenolpyruvate: step 2/7. Catalyzes the conversion of 3-deoxy-D-arabino-heptulosonate 7-phosphate (DAHP) to dehydroquinate (DHQ). The protein is 3-dehydroquinate synthase of Pseudoalteromonas atlantica (strain T6c / ATCC BAA-1087).